Consider the following 238-residue polypeptide: 1-(5-phosphoribosyl)-5-[(5-phosphoribosylamino)methylideneamino] imidazole-4-carboxamide isomerase (238 aa).

Asp8 functions as the Proton acceptor in the catalytic mechanism. Catalysis depends on Asp129, which acts as the Proton donor.

Belongs to the HisA/HisF family.

It is found in the cytoplasm. It catalyses the reaction 1-(5-phospho-beta-D-ribosyl)-5-[(5-phospho-beta-D-ribosylamino)methylideneamino]imidazole-4-carboxamide = 5-[(5-phospho-1-deoxy-D-ribulos-1-ylimino)methylamino]-1-(5-phospho-beta-D-ribosyl)imidazole-4-carboxamide. It participates in amino-acid biosynthesis; L-histidine biosynthesis; L-histidine from 5-phospho-alpha-D-ribose 1-diphosphate: step 4/9. This chain is 1-(5-phosphoribosyl)-5-[(5-phosphoribosylamino)methylideneamino] imidazole-4-carboxamide isomerase, found in Jannaschia sp. (strain CCS1).